Reading from the N-terminus, the 565-residue chain is uncharacterized protein (565 aa).

The next 5 membrane-spanning stretches (helical) occupy residues 4–26 (FVQF…AVWV), 33–55 (GYGL…VGAA), 68–90 (SLLY…VNAL), 97–119 (YAIL…TQFF), and 162–184 (ISAM…IILL). RCK C-terminal domains follow at residues 210–295 (PNVD…LGPE) and 296–379 (VPDA…IFGV). Helical transmembrane passes span 389–411 (LLTL…PAFG), 415–432 (GLGN…VSSI), 453–472 (LGLI…DLLT), 482–504 (IFIV…GFHI), and 539–561 (WLGF…YFAM).

This sequence belongs to the AAE transporter (TC 2.A.81) family.

The protein resides in the cell membrane. This is an uncharacterized protein from Bordetella bronchiseptica (strain ATCC BAA-588 / NCTC 13252 / RB50) (Alcaligenes bronchisepticus).